Here is a 327-residue protein sequence, read N- to C-terminus: Zinc transport protein ZntB (327 aa).

The Cytoplasmic portion of the chain corresponds to Met1 to Ser271. Residues Leu272–Gly292 traverse the membrane as a helical segment. Topologically, residues Gly293–Ser300 are periplasmic. A helical membrane pass occupies residues Phe301–Leu321. The Cytoplasmic portion of the chain corresponds to Lys322–Leu327.

Belongs to the CorA metal ion transporter (MIT) (TC 1.A.35) family.

The protein resides in the cell inner membrane. It catalyses the reaction Zn(2+)(out) + H(+)(out) = Zn(2+)(in) + H(+)(in). Functionally, zinc transporter. Acts as a Zn(2+):proton symporter, which likely mediates zinc ion uptake. This is Zinc transport protein ZntB from Yersinia enterocolitica serotype O:8 / biotype 1B (strain NCTC 13174 / 8081).